A 1239-amino-acid chain; its full sequence is Structural polyprotein (1239 aa).

Residues 1 to 35 (MFPYPTLNYPPMAPINPMAYRDPNPPRQVAPFRPP) are necessary for nucleocapsid assembly and virus assembly. Residues 1 to 101 (MFPYPTLNYP…RKPKPGKRQR (101 aa)) form a disordered region. The segment covering 23 to 34 (PNPPRQVAPFRP) has biased composition (pro residues). The interval 36-69 (LAAQIEDLRRSIANLTLKQRAPNPPAGPPAKRKK) is host transcription inhibition. Positions 43 to 50 (LRRSIANL) match the Supraphysiological nuclear export signal motif. Residue N49 is glycosylated (N-linked (GlcNAc...) asparagine; by host). Residues 66–69 (KRKK) carry the Nuclear localization signal motif. Residues 79–101 (KKKRPPPPAKKQKRKPKPGKRQR) are compositionally biased toward basic residues. Residues 81–111 (KRPPPPAKKQKRKPKPGKRQRMCMKLESDKT) are binding to the viral RNA. The interval 96 to 110 (PGKRQRMCMKLESDK) is ribosome-binding. A Phosphoserine modification is found at S108. One can recognise a Peptidase S3 domain in the interval 110–259 (KTFPIMLNGQ…KDTPEGSEPW (150 aa)). At T111 the chain carries Phosphothreonine. Catalysis depends on H136, which acts as the Charge relay system. Residues 152-157 (KKASIY) are interaction with spike glycoprotein E2. Active-site charge relay system residues include D158 and S210. The tract at residues 244–248 (QKGVT) is interaction with spike glycoprotein E2. The functions as an uncleaved signal peptide for the precursor of protein E3/E2 stretch occupies residues 260-271 (SLATVMCVLANI). Topologically, residues 260-681 (SLATVMCVLA…HVVVVYYYNR (422 aa)) are extracellular. Disulfide bonds link C266–C275, C280–C284, C283–C315, C341–C444, C344–C349, C411–C425, C472–C585, C521–C545, and C523–C539. The N-linked (GlcNAc...) asparagine; by host glycan is linked to N270. N-linked (GlcNAc...) asparagine; by host glycosylation is present at N637. Residues 682–702 (YPLTTIIGLCTCVAIIMVSCD) form a helical membrane-spanning segment. The Cytoplasmic segment spans residues 703–742 (HPCGSFSGLRNLCITPYKLAPNAQVPILLALLCCIKPTRA). C705 carries the S-palmitoyl cysteine; by host lipid modification. Residues 710 to 714 (GLRNL) are interaction with the capsid protein. The interval 714 to 734 (LCITPYKLAPNAQVPILLALL) is transient transmembrane before p62-6K protein processing. 3 S-palmitoyl cysteine; by host lipidation sites follow: C715, C735, and C736. An intrachain disulfide couples C715 to C736. Over 743-754 (DDTLQVLNYLWN) the chain is Extracellular. The helical transmembrane segment at 755 to 775 (NNQNFFWMQTLIPLAALIVCM) threads the bilayer. R776 is a topological domain (cytoplasmic). The helical transmembrane segment at 777-797 (MLAALFCCGPAFLLVCGAWAA) threads the bilayer. Residues 798–1215 (AYEHTAVMPN…WSWLKVLVGG (418 aa)) are Extracellular-facing. 4 disulfide bridges follow: C847–C912, C860–C892, C861–C894, and C866–C876. The segment at 882–899 (VYPFMWGGAYCFCDTENT) is E1 fusion peptide loop. 2 N-linked (GlcNAc...) asparagine; by host glycosylation sites follow: N932 and N1069. 3 disulfides stabilise this stretch: C1058/C1070, C1100/C1175, and C1105/C1179. Residues 1216-1236 (TSAFIVLGLIATAVVALVLFF) traverse the membrane as a helical segment. Residues 1237–1239 (HRH) are Cytoplasmic-facing.

In terms of assembly, homodimer. Homomultimer. Interacts with host karyopherin KPNA4; this interaction allows the nuclear import of the viral capsid protein. Interacts with spike glycoprotein E2. Interacts with host IRAK1; the interaction leads to inhibition of IRAK1-dependent signaling. Part of a tetrameric complex composed of host CRM1, host importin alpha/beta dimer and the viral capsid; this complex blocks the receptor-mediated transport through the nuclear pore. Interacts with host phosphatase PPP1CA; this interaction dephosphorylates the capsid protein, which increases its ability to bind to the viral genome. As to quaternary structure, the precursor of protein E3/E2 and E1 form a heterodimer shortly after synthesis. The precursor of protein E3/E2 and E1 form a heterodimer shortly after synthesis. Processing of the precursor of protein E3/E2 into E2 and E3 results in a heterodimer of the spike glycoproteins E2 and E1. Spike at virion surface are constituted of three E2-E1 heterodimers. After target cell attachment and endocytosis, E1 change conformation to form homotrimers. E2-E1 heterodimers interact with host VLDLR or LRP8/APOER2 to mediate viral entry. Interacts with 6K protein. In terms of assembly, interacts with spike glycoprotein E1. Processing of the precursor of protein E3/E2 into E2 and E3 results in a heterodimer of the spike glycoproteins E2 and E1. Spike at virion surface are constituted of a trimer of E2-E1 heterodimers. Interacts with 6K protein. E2-E1 heterodimers interact with host VLDLR or LRP8/APOER2 to mediate viral entry. Interacts (via E2-A) with host VLDLR (via class A repeats); this interaction mediates viral entry into host cell. Interacts with host LRP8/APOER2 (via class A repeats); this interaction mediates viral entry into host cell. As to quaternary structure, oligomer. Interacts with spike glycoprotein E1. Interacts with spike glycoprotein E2. Structural polyprotein: Specific enzymatic cleavages in vivo yield mature proteins. Capsid protein is auto-cleaved during polyprotein translation, unmasking a signal peptide at the N-terminus of the precursor of E3/E2. The remaining polyprotein is then targeted to the host endoplasmic reticulum, where host signal peptidase cleaves it into pE2, 6K and E1 proteins. pE2 is further processed to mature E3 and E2 by host furin in trans-Golgi vesicle. In terms of processing, phosphorylated on serine and threonine residues. Post-translationally, palmitoylated via thioester bonds. These palmitoylations may induce disruption of the C-terminus transmembrane. This would result in the reorientation of E2 C-terminus from lumenal to cytoplasmic side. N-glycosylated. In terms of processing, palmitoylated via thioester bonds.

Its subcellular location is the virion. The protein localises to the host cytoplasm. It localises to the host cell membrane. The protein resides in the host nucleus. It is found in the virion membrane. Its subcellular location is the host Golgi apparatus. The protein localises to the host trans-Golgi network. It localises to the host endoplasmic reticulum. It catalyses the reaction Autocatalytic release of the core protein from the N-terminus of the togavirus structural polyprotein by hydrolysis of a -Trp-|-Ser- bond.. Its function is as follows. Forms an icosahedral capsid with a T=4 symmetry composed of 240 copies of the capsid protein surrounded by a lipid membrane through which penetrate 80 spikes composed of trimers of E1-E2 heterodimers. The capsid protein binds to the viral RNA genome at a site adjacent to a ribosome binding site for viral genome translation following genome release. Possesses a protease activity that results in its autocatalytic cleavage from the nascent structural protein. Following its self-cleavage, the capsid protein transiently associates with ribosomes, and within several minutes the protein binds to viral RNA and rapidly assembles into icosahedric core particles. The resulting nucleocapsid eventually associates with the cytoplasmic domain of the spike glycoprotein E2 at the cell membrane, leading to budding and formation of mature virions. In case of infection, new virions attach to target cells and after clathrin-mediated endocytosis their membrane fuses with the host endosomal membrane. This leads to the release of the nucleocapsid into the cytoplasm, followed by an uncoating event necessary for the genomic RNA to become accessible. The uncoating might be triggered by the interaction of capsid proteins with ribosomes. Binding of ribosomes would release the genomic RNA since the same region is genomic RNA-binding and ribosome-binding. Specifically inhibits interleukin-1 receptor-associated kinase 1/IRAK1-dependent signaling during viral entry, representing a means by which the alphaviruses may evade innate immune detection and activation prior to viral gene expression. Inhibits host transcription. Forms a tetrameric complex with XPO1/CRM1 and the nuclear import receptor importin. This complex blocks the central channel of host nuclear pores thereby inhibiting the receptor-mediated nuclear transport and thus the host mRNA and rRNA transcription. The inhibition of transcription is linked to a cytopathic effect on the host cell. Provides the signal sequence for the translocation of the precursor of protein E3/E2 to the host endoplasmic reticulum. Furin-cleaved E3 remains associated with spike glycoprotein E1 and mediates pH protection of the latter during the transport via the secretory pathway. After virion release from the host cell, the assembly protein E3 is gradually released in the extracellular space. Functionally, plays a role in viral attachment to target host cell, by binding to the cell receptors VLDLR or LRP8/APOER2. Synthesized as a p62 precursor which is processed by furin at the cell membrane just before virion budding, giving rise to E2-E1 heterodimer. The p62-E1 heterodimer is stable, whereas E2-E1 is unstable and dissociate at low pH. p62 is processed at the last step, presumably to avoid E1 fusion activation before its final export to cell surface. E2 C-terminus contains a transitory transmembrane that would be disrupted by palmitoylation, resulting in reorientation of the C-terminal tail from lumenal to cytoplasmic side. This step is critical since E2 C-terminus is involved in budding by interacting with capsid proteins. This release of E2 C-terminus in cytoplasm occurs lately in protein export, and precludes premature assembly of particles at the endoplasmic reticulum membrane. In terms of biological role, acts as a viroporin that participates in virus glycoprotein processing and transport to the plasma membrane, cell permeabilization and budding of viral particles. Disrupts the calcium homeostasis of the cell, probably at the endoplasmic reticulum level. This leads to cytoplasmic calcium elevation. Because of its lipophilic properties, the 6K protein is postulated to influence the selection of lipids that interact with the transmembrane domains of the glycoproteins, which, in turn, affects the deformability of the bilayer required for the extreme curvature that occurs as budding proceeds. Present in low amount in virions, about 3% compared to viral glycoproteins. Its function is as follows. Class II viral fusion protein. Fusion activity is inactive as long as E1 is bound to E2 in mature virion. After virus attachment to target cell via host VLDLR or LRP8/APOER2 and endocytosis, acidification of the endosome induces dissociation of E1/E2 heterodimer and concomitant trimerization of the E1 subunits. This E1 trimer is fusion active, and promotes release of viral nucleocapsid in cytoplasm after endosome and viral membrane fusion. Efficient fusion requires the presence of cholesterol and sphingolipid in the target membrane. The protein is Structural polyprotein of Aedes (Human).